The chain runs to 494 residues: Protein DETOXIFICATION 21 (494 aa).

Position 2 is an N-acetylalanine (alanine 2). The next 12 membrane-spanning stretches (helical) occupy residues 40-60 (LWIVAAPAIFTRFSTFGVSII), 73-95 (LAAYSITFTVLLRFSNGILLGMA), 123-143 (IVLTGCTICLTPVYIFSGPIL), 158-178 (IIALWVIGINFSFVPSFTCQM), 188-208 (IIAYVAAVSLGVHVFLSWLLM), 217-237 (GAMTSTLVAFWLPNIAQLLFV), 268-288 (GGMLCLELWYNSILVLLTGNL), 297-317 (ALAICLNINGLEMMIALGFLA), 340-360 (LTAVFTSLSLGIVLFFVFLFL), 384-404 (LLAFSILMNSVQPVLSGVAVG), 416-436 (LACYYLVGIPIGIILGYVVGL), and 441-461 (VWIGMLFGIFVQTCVLTVMTL).

This sequence belongs to the multi antimicrobial extrusion (MATE) (TC 2.A.66.1) family.

The protein localises to the membrane. The chain is Protein DETOXIFICATION 21 from Arabidopsis thaliana (Mouse-ear cress).